Consider the following 761-residue polypeptide: RNA-binding protein mde7 (761 aa).

Polar residues-rich tracts occupy residues 31 to 46 (PNHS…NSLL), 58 to 83 (SRNS…TTPF), and 99 to 110 (SRNNSYLQGTAE). Disordered regions lie at residues 31 to 110 (PNHS…GTAE) and 188 to 213 (HYFD…EASN). The span at 188–197 (HYFDDTDKSV) shows a compositional bias: basic and acidic residues. Residues 199 to 211 (SKSSSGSNSLSEA) are compositionally biased toward low complexity. An RRM 1 domain is found at 223–289 (IVGGLPDDFD…SSTNNFTIIQ (67 aa)). Residues 442 to 466 (ESNSLSNQPNNFAQTSFDYQPNHPN) show a composition bias toward polar residues. The segment at 442–468 (ESNSLSNQPNNFAQTSFDYQPNHPNAI) is disordered. The 78-residue stretch at 602 to 679 (NTIYVGNLSN…GGIRLSYSKN (78 aa)) folds into the RRM 2 domain.

This chain is RNA-binding protein mde7 (mde7), found in Schizosaccharomyces pombe (strain 972 / ATCC 24843) (Fission yeast).